The primary structure comprises 436 residues: 3-ketoacyl-CoA thiolase (436 aa).

Cys99 acts as the Acyl-thioester intermediate in catalysis. Catalysis depends on proton acceptor residues His392 and Cys422.

Belongs to the thiolase-like superfamily. Thiolase family. Heterotetramer of two alpha chains (FadJ) and two beta chains (FadI).

It localises to the cytoplasm. It catalyses the reaction an acyl-CoA + acetyl-CoA = a 3-oxoacyl-CoA + CoA. It participates in lipid metabolism; fatty acid beta-oxidation. Functionally, catalyzes the final step of fatty acid oxidation in which acetyl-CoA is released and the CoA ester of a fatty acid two carbons shorter is formed. This Shigella dysenteriae serotype 1 (strain Sd197) protein is 3-ketoacyl-CoA thiolase.